Here is a 68-residue protein sequence, read N- to C-terminus: Medusin-DA1 (68 aa).

Positions 1-22 (MAFLKKSLFLVLFLGLVSLSVC) are cleaved as a signal peptide. Positions 23-48 (EEEKRENEEEKNEQEEDDREERNEEK) are excised as a propeptide. The tract at residues 25 to 47 (EKRENEEEKNEQEEDDREERNEE) is disordered. Positions 31–41 (EEKNEQEEDDR) are enriched in acidic residues. Leu67 is subject to Leucine amide.

The protein belongs to the frog skin active peptide (FSAP) family. Medusin subfamily. Expressed by the skin glands.

It localises to the secreted. Its function is as follows. Antimicrobial peptide with activity against Gram-positive bacteria (S.aureus, MIC=32 mg/L) and fungi (C.albicans, MIC=64 mg/L). Shows weak hemolytic activity. The sequence is that of Medusin-DA1 from Agalychnis dacnicolor (Giant Mexican leaf frog).